Consider the following 33-residue polypeptide: Protamine TP14 (33 aa).

Residues 1 to 33 are disordered; it reads MPRRRRSSRPPVRRRRRPRVSRRRRRRGGRRRR.

In terms of tissue distribution, testis.

It is found in the nucleus. Its subcellular location is the chromosome. In terms of biological role, protamines substitute for histones in the chromatin of sperm during the haploid phase of spermatogenesis. They compact sperm DNA into a highly condensed, stable and inactive complex. The chain is Protamine TP14 from Oncorhynchus mykiss (Rainbow trout).